A 1399-amino-acid chain; its full sequence is DNA-directed RNA polymerase subunit beta' (1399 aa).

4 residues coordinate Zn(2+): cysteine 70, cysteine 72, cysteine 85, and cysteine 88. Residues aspartate 460, aspartate 462, and aspartate 464 each coordinate Mg(2+). Zn(2+)-binding residues include cysteine 814, cysteine 888, cysteine 895, and cysteine 898.

This sequence belongs to the RNA polymerase beta' chain family. In terms of assembly, the RNAP catalytic core consists of 2 alpha, 1 beta, 1 beta' and 1 omega subunit. When a sigma factor is associated with the core the holoenzyme is formed, which can initiate transcription. Mg(2+) serves as cofactor. Zn(2+) is required as a cofactor.

The enzyme catalyses RNA(n) + a ribonucleoside 5'-triphosphate = RNA(n+1) + diphosphate. In terms of biological role, DNA-dependent RNA polymerase catalyzes the transcription of DNA into RNA using the four ribonucleoside triphosphates as substrates. This is DNA-directed RNA polymerase subunit beta' from Pseudomonas putida (strain W619).